We begin with the raw amino-acid sequence, 225 residues long: Germin-like protein 8-7 (225 aa).

Residues 1 to 23 form the signal peptide; it reads MASPSSFCLLAVLLALVSWQAIA. An intrachain disulfide couples Cys-33 to Cys-48. The 151-residue stretch at 63–213 folds into the Cupin type-1 domain; the sequence is AMLDTPRKTN…AFQVEKGTID (151 aa). Asn-77 is a glycosylation site (N-linked (GlcNAc...) asparagine). Mn(2+) contacts are provided by His-110, His-112, and Glu-117. N-linked (GlcNAc...) asparagine glycosylation occurs at Asn-136. Residue His-158 participates in Mn(2+) binding.

Belongs to the germin family. As to quaternary structure, oligomer (believed to be a pentamer but probably hexamer).

It is found in the secreted. The protein resides in the extracellular space. Its subcellular location is the apoplast. Functionally, plays a role in broad-spectrum disease resistance. Probably has no oxalate oxidase activity even if the active site is conserved. The polypeptide is Germin-like protein 8-7 (GER6) (Oryza sativa subsp. japonica (Rice)).